Reading from the N-terminus, the 64-residue chain is Large ribosomal subunit protein bL35 (64 aa).

The protein belongs to the bacterial ribosomal protein bL35 family.

In Acinetobacter baumannii (strain AB307-0294), this protein is Large ribosomal subunit protein bL35.